We begin with the raw amino-acid sequence, 122 residues long: uncharacterized protein (122 aa).

2 disordered regions span residues 1–30 (MGRE…DQPE) and 96–122 (FKSC…DAMG).

This is an uncharacterized protein from Homo sapiens (Human).